Consider the following 440-residue polypeptide: Ribulose bisphosphate carboxylase large chain (440 aa).

The residue at position 4 (Lys4) is an N6,N6,N6-trimethyllysine. Asn113 and Thr163 together coordinate substrate. The active-site Proton acceptor is the Lys165. A substrate-binding site is contributed by Lys167. Lys191, Asp193, and Glu194 together coordinate Mg(2+). An N6-carboxylysine modification is found at Lys191. His284 functions as the Proton acceptor in the catalytic mechanism. Substrate contacts are provided by Arg285, His317, and Ser369.

This sequence belongs to the RuBisCO large chain family. Type I subfamily. In terms of assembly, heterohexadecamer of 8 large chains and 8 small chains; disulfide-linked. The disulfide link is formed within the large subunit homodimers. Mg(2+) serves as cofactor. The disulfide bond which can form in the large chain dimeric partners within the hexadecamer appears to be associated with oxidative stress and protein turnover.

The protein localises to the plastid. The protein resides in the chloroplast. The enzyme catalyses 2 (2R)-3-phosphoglycerate + 2 H(+) = D-ribulose 1,5-bisphosphate + CO2 + H2O. It carries out the reaction D-ribulose 1,5-bisphosphate + O2 = 2-phosphoglycolate + (2R)-3-phosphoglycerate + 2 H(+). Its function is as follows. RuBisCO catalyzes two reactions: the carboxylation of D-ribulose 1,5-bisphosphate, the primary event in carbon dioxide fixation, as well as the oxidative fragmentation of the pentose substrate in the photorespiration process. Both reactions occur simultaneously and in competition at the same active site. The polypeptide is Ribulose bisphosphate carboxylase large chain (Ptychomitrium gardneri (Gardner's ptychomitrium moss)).